We begin with the raw amino-acid sequence, 942 residues long: MMVMIDFKEIEKKWQKRWEEAKIFEANPDDREKFFITAAFPYLNGVLHAGHLRTFTIPEVVARFQRMKNKNVLWTFGYHVTGTPILGLAELIKNRDEKTIWAYTELHGIPKEELLELTTPEKIVEYFSKKAEEAFKRMGFSLDWRRNFKTDDKVFNKFIEWQFHKLKEKGLIVKGSHPVRYCPRCDNPVEDHDILVGENATLVEYILIKFTTEDGCIMPMATLRPETVFGVTNVWVNPEATYVKAKVYLEKETENGIELIENGIWIMAKECAEKLKHQDRKIEIIEEFKGEQLINKKVKNPVTGKEVPILPAKFVKTNIGTGCVMSVPAHAPYDYIALRDLGLVDEIGLIPLINVPGYGKYPAKEIVEKMGIKSQEEEDKLEEATKKIYKDEFHKGVLNENCLDYEGIPVREIKDKLTKDLIDKGLAEIMYEFSEEKVICRCGTPCIVKMVKGQWFIKYSDEKWKELAHKCIDKMRFIPENLRQVFHEKIDWMKDKACVRRRGLGTKFPFEEGWVIESLSDSTIYPAYYTVAKYINQHNIKPEQLTLELFDYVFLGKGDVDKIAKETGIPKDIIEGMRKEFIYYYPVDWRCSAKDLIPNHLTFYIFNHVAIFPEEFWPRGIVVNGYVTIEGKKLSKSKGPVLPVLEVAEKFGADVGRFYITTCAELPQDADIKFKEMENTKKVLERLYLFAKEIAERRGETGEEFSYIDKWLLSRLYKAVKQYDEYMENFELRKAGILLYQLLDDLKWYRRRGGNNIRVLEEFLEVIIKLMMPFTPHLCEEMWEILGKEGFVSLAKFPEVKEEFINDEIEKGEEYLKAVMEDIKEIINVAKVQPKRIYLYTADDWKYEILKIIKENEGKTIKELMPIIMKNPEFRKYGKEIPKLVNQLIKLNAEIINEVEVLENAKEFLKKEVGVEDIIINGEDKANKKRVAIPFKPAIYLE.

The short motif at 41-51 (PYLNGVLHAGH) is the 'HIGH' region element. The 'KMSKS' region signature appears at 633 to 637 (KLSKS). K636 is an ATP binding site.

This sequence belongs to the class-I aminoacyl-tRNA synthetase family.

It localises to the cytoplasm. The catalysed reaction is tRNA(Leu) + L-leucine + ATP = L-leucyl-tRNA(Leu) + AMP + diphosphate. This chain is Leucine--tRNA ligase, found in Methanocaldococcus jannaschii (strain ATCC 43067 / DSM 2661 / JAL-1 / JCM 10045 / NBRC 100440) (Methanococcus jannaschii).